We begin with the raw amino-acid sequence, 262 residues long: Sperm microtubule inner protein 6 (262 aa).

Belongs to the SPMIP6 family. As to quaternary structure, microtubule inner protein component of sperm flagellar doublet microtubules. Interacts with alpha-tubulin. As to expression, expressed in testis. Strongly expressed in ciliated epithelial cells with lower levels in goblet cells (at protein level).

It is found in the cytoplasm. Its subcellular location is the cytoskeleton. The protein resides in the nucleus. The protein localises to the mitochondrion. It localises to the flagellum axoneme. May participate in intramanchette transport and midpiece formation of the sperm tail. May play a potential role in somatic cell proliferation. The protein is Sperm microtubule inner protein 6 of Homo sapiens (Human).